A 233-amino-acid chain; its full sequence is Small ribosomal subunit protein uS2c (233 aa).

Belongs to the universal ribosomal protein uS2 family.

Its subcellular location is the plastid. The protein resides in the cyanelle. In Cyanophora paradoxa, this protein is Small ribosomal subunit protein uS2c (rps2).